The following is a 183-amino-acid chain: NEDD8-conjugating enzyme Ubc12 (183 aa).

The residue at position 1 (Met1) is an N-acetylmethionine. The disordered stretch occupies residues 1 to 28 (MIKLFSLKQQKKEEESAGGTKGSSKKAS). Residues 29-173 (AAQLRIQKDI…VQRSMRGGYI (145 aa)) form the UBC core domain. The active-site Glycyl thioester intermediate is the Cys111.

The protein belongs to the ubiquitin-conjugating enzyme family. UBC12 subfamily. The acetylation of Met-1 increases affinity for DCUN1D1 by about 2 orders of magnitude and is crucial for NEDD8 transfer to cullins.

The enzyme catalyses [E1 NEDD8-activating enzyme]-S-[NEDD8 protein]-yl-L-cysteine + [E2 NEDD8-conjugating enzyme]-L-cysteine = [E1 NEDD8-activating enzyme]-L-cysteine + [E2 NEDD8-conjugating enzyme]-S-[NEDD8-protein]-yl-L-cysteine.. It participates in protein modification; protein neddylation. Its function is as follows. Accepts the ubiquitin-like protein NEDD8 from the UBA3-NAE1 E1 complex and catalyzes its covalent attachment to other proteins. The specific interaction with the E3 ubiquitin ligase rbx1, but not rbx2, suggests that the rbx1-ube2m complex neddylates specific target proteins, such as cul1, cul2, cul3 and cul4. Involved in cell proliferation. This Xenopus laevis (African clawed frog) protein is NEDD8-conjugating enzyme Ubc12 (ube2m).